Here is a 505-residue protein sequence, read N- to C-terminus: ATP synthase subunit alpha, chloroplastic (505 aa).

170–177 is a binding site for ATP; the sequence is GDRQTGKT.

The protein belongs to the ATPase alpha/beta chains family. F-type ATPases have 2 components, CF(1) - the catalytic core - and CF(0) - the membrane proton channel. CF(1) has five subunits: alpha(3), beta(3), gamma(1), delta(1), epsilon(1). CF(0) has four main subunits: a, b, b' and c.

Its subcellular location is the plastid. The protein resides in the chloroplast thylakoid membrane. The enzyme catalyses ATP + H2O + 4 H(+)(in) = ADP + phosphate + 5 H(+)(out). Functionally, produces ATP from ADP in the presence of a proton gradient across the membrane. The alpha chain is a regulatory subunit. The chain is ATP synthase subunit alpha, chloroplastic from Oenothera parviflora (Small-flowered evening primrose).